Reading from the N-terminus, the 308-residue chain is Transaldolase (308 aa).

Catalysis depends on lysine 125, which acts as the Schiff-base intermediate with substrate.

This sequence belongs to the transaldolase family. Type 1 subfamily. In terms of assembly, homodimer.

The protein resides in the cytoplasm. It carries out the reaction D-sedoheptulose 7-phosphate + D-glyceraldehyde 3-phosphate = D-erythrose 4-phosphate + beta-D-fructose 6-phosphate. It participates in carbohydrate degradation; pentose phosphate pathway; D-glyceraldehyde 3-phosphate and beta-D-fructose 6-phosphate from D-ribose 5-phosphate and D-xylulose 5-phosphate (non-oxidative stage): step 2/3. In terms of biological role, transaldolase is important for the balance of metabolites in the pentose-phosphate pathway. In Pseudomonas fluorescens (strain ATCC BAA-477 / NRRL B-23932 / Pf-5), this protein is Transaldolase.